The primary structure comprises 311 residues: MRTVTVGTRGSTLALAQTRWVVARLKEEWPDTDFRIQTISTKGDRNRESLEAMAQKGDKGFWVKEIEDALLQKRIDIAVHSLKDLPTEQPEGLEVASIPKRVDARDVLIGKEGMKRLADLPQGARVGTSSVRRKAFLRAYRPDLQVIDLRGNIDTRLAALAGDEYDAIILAAAGLIRTEMRHRIDEFVEPDILLPAPGQGALALETRSGPENDLTIEVAYAIHDHGTDDRITAEREFLAGLGAGCMAPVGAHASIKGGVLTLEGWVGALDGSKVIRATSIGDPAECADIGAELAGDMLGQGAQALIDAARE.

Position 245 is an S-(dipyrrolylmethanemethyl)cysteine (C245).

The protein belongs to the HMBS family. Monomer. It depends on dipyrromethane as a cofactor.

The enzyme catalyses 4 porphobilinogen + H2O = hydroxymethylbilane + 4 NH4(+). The protein operates within porphyrin-containing compound metabolism; protoporphyrin-IX biosynthesis; coproporphyrinogen-III from 5-aminolevulinate: step 2/4. Tetrapolymerization of the monopyrrole PBG into the hydroxymethylbilane pre-uroporphyrinogen in several discrete steps. This chain is Porphobilinogen deaminase, found in Deinococcus deserti (strain DSM 17065 / CIP 109153 / LMG 22923 / VCD115).